The sequence spans 241 residues: Endothelial protein C receptor (241 aa).

Residues methionine 1 to cysteine 20 form the signal peptide. Residues asparagine 21–serine 213 lie on the Extracellular side of the membrane. Residues asparagine 47, asparagine 64, asparagine 139, asparagine 165, and asparagine 175 are each glycosylated (N-linked (GlcNAc...) asparagine). The chain crosses the membrane as a helical span at residues leucine 214–leucine 234. Over cysteine 235–cysteine 241 the chain is Cytoplasmic.

The protein localises to the membrane. Functionally, binds activated protein C. Enhances protein C activation by the thrombin-thrombomodulin complex; plays a role in the protein C pathway controlling blood coagulation. The polypeptide is Endothelial protein C receptor (Procr) (Rattus norvegicus (Rat)).